The following is a 233-amino-acid chain: Choline-phosphate cytidylyltransferase (233 aa).

CDP-choline contacts are provided by leucine 6, alanine 8, glycine 9, tyrosine 80, serine 85, and alanine 101. Residue aspartate 102 participates in Mg(2+) binding. Residue tyrosine 187 coordinates CDP-choline. Glutamate 213 and aspartate 215 together coordinate Mg(2+).

This sequence belongs to the LicC/PntC cytidylyltransferase family. Mg(2+) is required as a cofactor.

The enzyme catalyses phosphocholine + CTP + H(+) = CDP-choline + diphosphate. It participates in lipopolysaccharide biosynthesis. In terms of biological role, cytidylyltransferase involved in the biosynthesis of lipopolysaccharides (LPS), a necessary component and antigenic determinant of the outer membrane that has been shown to be an important factor in the host-parasite interaction in a number of Gram-negative species. Catalyzes the activation of phosphocholine (P-Cho) to CDP-choline (CDP-Cho). LicC is critical for the expression of the 6A2-specific epitope. The polypeptide is Choline-phosphate cytidylyltransferase (Haemophilus influenzae (strain ATCC 51907 / DSM 11121 / KW20 / Rd)).